The following is a 338-amino-acid chain: Malate dehydrogenase, mitochondrial (338 aa).

A mitochondrion-targeting transit peptide spans 1-24 (MLSALARPAGAALRRSFSTSAQNN). Residues 31–37 (GASGGIG) and Asp57 each bind NAD(+). O-linked (GlcNAc) serine glycosylation is present at Ser33. Residues Lys78 and Lys91 each carry the N6-acetyllysine; alternate modification. Lys78 and Lys91 each carry N6-succinyllysine; alternate. Residues Arg104 and Arg110 each contribute to the substrate site. NAD(+) is bound by residues Asn117 and 140–142 (IAN). Asn142 lines the substrate pocket. N6-acetyllysine is present on Lys165. Arg176 serves as a coordination point for substrate. Position 185 is an N6-acetyllysine; alternate (Lys185). Lys185 is subject to N6-succinyllysine; alternate. The active-site Proton acceptor is the His200. Position 203 is an N6-succinyllysine (Lys203). N6-acetyllysine; alternate is present on residues Lys215 and Lys239. Residues Lys215 and Lys239 each carry the N6-succinyllysine; alternate modification. An N6-malonyllysine; alternate modification is found at Lys239. Ser246 carries the phosphoserine modification. Met251 serves as a coordination point for NAD(+). An N6-succinyllysine modification is found at Lys269. Lys296, Lys301, and Lys307 each carry N6-acetyllysine; alternate. Lys296, Lys301, and Lys307 each carry N6-succinyllysine; alternate. N6-malonyllysine; alternate is present on Lys307. Thr309 is subject to Phosphothreonine. N6-acetyllysine; alternate is present on residues Lys314 and Lys324. An N6-succinyllysine; alternate mark is found at Lys314 and Lys324. Residue Ser326 is modified to Phosphoserine. An N6-acetyllysine; alternate mark is found at Lys328, Lys329, and Lys335. An N6-succinyllysine; alternate modification is found at Lys328. The residue at position 329 (Lys329) is an N6-malonyllysine; alternate. Lys335 is modified (N6-succinyllysine; alternate).

Belongs to the LDH/MDH superfamily. MDH type 1 family. In terms of assembly, homodimer. Acetylation is enhanced after treatment either with trichostin A (TCA) or with nicotinamide (NAM) with the appearance of tri- and tetraacetylations. Glucose also increases acetylation. Acetylation of Lys-239 and Lys-314 is observed in liver mitochondria from fasted mice but not from fed mice.

The protein resides in the mitochondrion matrix. The enzyme catalyses (S)-malate + NAD(+) = oxaloacetate + NADH + H(+). Enzyme activity is enhanced by acetylation. This is Malate dehydrogenase, mitochondrial (Mdh2) from Mus musculus (Mouse).